The following is a 78-amino-acid chain: Acyl carrier protein (78 aa).

Residues 2 to 77 (STIEERVKKI…AAIDYVNSHK (76 aa)) form the Carrier domain. S37 bears the O-(pantetheine 4'-phosphoryl)serine mark.

It belongs to the acyl carrier protein (ACP) family. In terms of processing, 4'-phosphopantetheine is transferred from CoA to a specific serine of apo-ACP by AcpS. This modification is essential for activity because fatty acids are bound in thioester linkage to the sulfhydryl of the prosthetic group.

It localises to the cytoplasm. It participates in lipid metabolism; fatty acid biosynthesis. In terms of biological role, carrier of the growing fatty acid chain in fatty acid biosynthesis. This chain is Acyl carrier protein, found in Pseudomonas putida (strain GB-1).